A 557-amino-acid chain; its full sequence is Potassium-transporting ATPase potassium-binding subunit (557 aa).

Helical transmembrane passes span 5-25 (GFLLIATFLLVLMVLARPLGS), 63-83 (LSAILGLNILGLAVLFFMLLG), 132-152 (GLTVQNFLSAASGIAVIFALI), 170-190 (LLRITLWVLAPVALLIALFFI), 253-273 (FVQMLAIFLIPTALCFAFGEV), 283-303 (LLWAMSVIFVICTGVVMWAEV), 329-349 (VLVSSLFAVVTTAASCGAVIA), 356-376 (ALGGMVPMWLMQIGEVVFGGV), 379-399 (GLYGMMLFVLLAVFIAGLMIG), 416-436 (LTALAILVTPTLVLMGAALAM), 484-504 (LLALCMFVGRFGVIIPVMAIA), and 526-546 (LFVGLLIGTVLLVGALTFIPA).

This sequence belongs to the KdpA family. The system is composed of three essential subunits: KdpA, KdpB and KdpC.

It is found in the cell inner membrane. Functionally, part of the high-affinity ATP-driven potassium transport (or Kdp) system, which catalyzes the hydrolysis of ATP coupled with the electrogenic transport of potassium into the cytoplasm. This subunit binds the periplasmic potassium ions and delivers the ions to the membrane domain of KdpB through an intramembrane tunnel. This Escherichia coli O6:H1 (strain CFT073 / ATCC 700928 / UPEC) protein is Potassium-transporting ATPase potassium-binding subunit.